An 84-amino-acid polypeptide reads, in one-letter code: U8-theraphotoxin-Hhn1d (84 aa).

The first 21 residues, methionine 1–cysteine 21, serve as a signal peptide directing secretion. Intrachain disulfides connect cysteine 23-cysteine 35, cysteine 29-cysteine 44, cysteine 34-cysteine 67, cysteine 54-cysteine 75, and cysteine 69-cysteine 81.

It belongs to the AVIT (prokineticin) family. Expressed by the venom gland.

It localises to the secreted. The protein is U8-theraphotoxin-Hhn1d of Cyriopagopus hainanus (Chinese bird spider).